The primary structure comprises 164 residues: Small ribosomal subunit protein uS3m (164 aa).

The N-terminal 23 residues, 1–23 (MLRSIQHVEALSSRQISTTSMLL), are a transit peptide targeting the mitochondrion.

This sequence belongs to the universal ribosomal protein uS3 family. Component of the mitochondrial ribosome small subunit (28S) which comprises a 12S rRNA and about 30 distinct proteins.

The protein localises to the mitochondrion. In Caenorhabditis elegans, this protein is Small ribosomal subunit protein uS3m (mrps-24).